The sequence spans 402 residues: E3 ubiquitin-protein ligase makorin-2 (402 aa).

3 consecutive C3H1-type zinc fingers follow at residues Thr-2 to Ser-29, Ser-31 to Leu-58, and Gln-141 to Lys-168. Positions Cys-169 to Ala-198 are makorin-type Cys-His. The RING-type zinc-finger motif lies at Cys-214–Arg-268. Residues Gly-297–Pro-326 form a C3H1-type 4 zinc finger.

It is found in the cytoplasm. Its subcellular location is the nucleus. The catalysed reaction is S-ubiquitinyl-[E2 ubiquitin-conjugating enzyme]-L-cysteine + [acceptor protein]-L-lysine = [E2 ubiquitin-conjugating enzyme]-L-cysteine + N(6)-ubiquitinyl-[acceptor protein]-L-lysine.. It functions in the pathway protein modification; protein ubiquitination. In terms of biological role, E3 ubiquitin ligase catalyzing the covalent attachment of ubiquitin moieties onto substrate proteins. Inhibits neurogenesis and axis formation during embryonic development by modulating the phosphatidylinositol 3-kinase (PI3K) pathway. Acts downstream of PI3K and akt1 to up-regulate gsk3b mRNA expression. This chain is E3 ubiquitin-protein ligase makorin-2, found in Takifugu rubripes (Japanese pufferfish).